The chain runs to 250 residues: Cholesterol ring-cleaving hydrolase IpdB subunit (250 aa).

The protein belongs to the 3-oxoacid CoA-transferase subunit B family. Heterotetramer composed of 2 IpdA subunits and 2 IpdB subunits.

It carries out the reaction (3E)-2-(2-carboxylatoethyl)-3-methyl-6-oxocyclohex-1-ene-1-carboxyl-CoA + H2O = 6-methyl-3,7-dioxodecanedioyl-CoA. The protein operates within steroid metabolism; cholesterol degradation. Functionally, involved in the final steps of cholesterol and steroid degradation. Opens the last steroid ring of cholesterol by catalyzing the hydrolysis of (3E)-2-(2-carboxylatoethyl)-3-methyl-6-oxocyclohex-1-ene-1-carboxyl-CoA (COCHEA-CoA) to 6-methyl-3,7-dioxodecanedioyl-CoA (MeDODA-CoA). This chain is Cholesterol ring-cleaving hydrolase IpdB subunit, found in Mycobacterium bovis (strain ATCC BAA-935 / AF2122/97).